The following is a 682-amino-acid chain: Polycomb protein suz12-B (682 aa).

The interval 326-355 (DPSDPSTAPVAKPLSTRNSDTSTTESRIST) is disordered. The span at 340–354 (STRNSDTSTTESRIS) shows a compositional bias: polar residues. The C2H2-type zinc-finger motif lies at 408 to 431 (LHCPWCTLNCRKLYSLLKHLKLSH). The VEFS-box stretch occupies residues 523–599 (RLYFHSDSCM…NQMSQASMLF (77 aa)).

It belongs to the VEFS (VRN2-EMF2-FIS2-SU(Z)12) family. As to quaternary structure, component of the prc2/eed-ezh2 complex.

The protein localises to the nucleus. Its function is as follows. Polycomb group (PcG) protein. Component of the prc2/eed-ezh2 complex, which methylates 'Lys-9' and 'Lys-27' of histone H3, leading to transcriptional repression of the affected target gene. The chain is Polycomb protein suz12-B (suz12b) from Danio rerio (Zebrafish).